A 268-amino-acid polypeptide reads, in one-letter code: 5'-nucleotidase SurE (268 aa).

Residues Asp-24, Asp-25, Ser-55, and Asn-111 each contribute to the a divalent metal cation site.

This sequence belongs to the SurE nucleotidase family. It depends on a divalent metal cation as a cofactor.

The protein resides in the cytoplasm. It catalyses the reaction a ribonucleoside 5'-phosphate + H2O = a ribonucleoside + phosphate. Functionally, nucleotidase that shows phosphatase activity on nucleoside 5'-monophosphates. The sequence is that of 5'-nucleotidase SurE from Deinococcus radiodurans (strain ATCC 13939 / DSM 20539 / JCM 16871 / CCUG 27074 / LMG 4051 / NBRC 15346 / NCIMB 9279 / VKM B-1422 / R1).